The primary structure comprises 445 residues: Probable D-serine dehydratase (445 aa).

The residue at position 111 (Lys-111) is an N6-(pyridoxal phosphate)lysine.

It belongs to the serine/threonine dehydratase family. DsdA subfamily. It depends on pyridoxal 5'-phosphate as a cofactor.

The enzyme catalyses D-serine = pyruvate + NH4(+). This is Probable D-serine dehydratase from Burkholderia pseudomallei (strain 1710b).